Reading from the N-terminus, the 60-residue chain is Large ribosomal subunit protein bL32 (60 aa).

A compositionally biased stretch (basic residues) spans 1 to 23; it reads MAKHPVPKKKTSKARRDARRSHH. Positions 1 to 30 are disordered; the sequence is MAKHPVPKKKTSKARRDARRSHHALTPPTL.

As to quaternary structure, part of the 50S ribosomal subunit.

In terms of biological role, found on the solvent side of the large subunit. The protein is Large ribosomal subunit protein bL32 (rpmF) of Thermus thermophilus (strain ATCC 27634 / DSM 579 / HB8).